The primary structure comprises 754 residues: MKVNLKLIIGSILISQAQAIWPFDSSGSSSSSDSSPSETGSSGGTFPFDLFGSGSSLTQSSSAQASSTKSTSDSASSTDSSLFSSSNSGSSWYQTFLDGDSGDQKTDYAPFNLTCPSKKTFIRTASELSQQEKDYIHKRQETTNKNLIDFLSKRANLSDFDAKSFINDNAPNHNITIGLSFSGGGYRAMLAGAGQILGLDGRYEDANKHGLGGLLDSSTYVVGLSGGNWLVGSLALNDWLSVGDIVNGKSTIWQLQDSILNPSGMRIDKTIAYYYGLAQAVQAKEDAGFQTSVTDTWGRALSYQFFEEDDSGTGGANITWSSIRNLSSFQDHSMPYPIVVANGRTPGTYIINENSTIFEISPYELGSWDPSLKSFSNIQYLGSSVNNGNPNNTDICVNNFDNAGFIMGTSSSLFNQILLQLDNYSINSIIKMILEKVLTDVSDEEYDIAVYEPNPFFGADSAGIKSITTNDTLYLCDGGEDLQNVPFYPLIQNKRGVDVIFAFDNSADTNSSWPNGTSIQETYKRQFSKQGKGTPFPFAPDYKTFLDKNMGDKPVFFGCNSSDLEDLVAWHENDKINVTDVPLVVYTSNTRMSYNSNFSTFKLSYSDQEKFGAIRNGFETVTRNNLTDDENWSTCVGCAIIRRQQERLGEEQSDECKKCFQEYCWTGGFKDAASVSSVSGISGLAAKTHTSGGTSSTTQQTSTTTGSSANGGSSSTGSSSSSKKKNGGDLVNGGVPSSIFLVFNSLLGLIIAYL.

Residues 1–19 (MKVNLKLIIGSILISQAQA) form the signal peptide. Composition is skewed to low complexity over residues 25–40 (SSGS…SETG) and 50–88 (LFGS…SSNS). The interval 25–88 (SSGSSSSSDS…DSSLFSSSNS (64 aa)) is disordered. N-linked (GlcNAc...) asparagine glycosylation is found at Asn112, Asn156, Asn174, Asn317, Asn325, Asn354, Asn391, Asn423, Asn470, Asn510, Asn515, Asn560, Asn577, Asn597, Asn625, and Asn631. The 557-residue stretch at 114–670 (TCPSKKTFIR…QEYCWTGGFK (557 aa)) folds into the PLA2c domain. Residues 687–721 (KTHTSGGTSSTTQQTSTTTGSSANGGSSSTGSSSS) show a composition bias toward low complexity. Residues 687–727 (KTHTSGGTSSTTQQTSTTTGSSANGGSSSTGSSSSSKKKNG) form a disordered region.

This sequence belongs to the lysophospholipase family.

It localises to the secreted. It catalyses the reaction a 1-acyl-sn-glycero-3-phosphocholine + H2O = sn-glycerol 3-phosphocholine + a fatty acid + H(+). In terms of biological role, catalyzes the release of fatty acids from lysophospholipids. Phospholipase B may well contribute to pathogenicity by abetting the fungus in damaging and traversing host cell membranes, processes which likely increase the rapidity of disseminated infection. The sequence is that of Lysophospholipase 3 (PLB3) from Candida albicans (Yeast).